We begin with the raw amino-acid sequence, 154 residues long: Ribosome maturation factor RimP (154 aa).

Belongs to the RimP family.

It localises to the cytoplasm. Functionally, required for maturation of 30S ribosomal subunits. The chain is Ribosome maturation factor RimP from Clostridium perfringens (strain SM101 / Type A).